An 89-amino-acid chain; its full sequence is MYLDAAEKQEIFGKYGKSNSDTGSTEAQIALFSYRISHLTEHMKLNRKDYSTERALTMLVAKRRRLLNYLKDKDITRYRSIVKELGLRK.

Belongs to the universal ribosomal protein uS15 family. In terms of assembly, part of the 30S ribosomal subunit. Forms a bridge to the 50S subunit in the 70S ribosome, contacting the 23S rRNA.

Its function is as follows. One of the primary rRNA binding proteins, it binds directly to 16S rRNA where it helps nucleate assembly of the platform of the 30S subunit by binding and bridging several RNA helices of the 16S rRNA. Forms an intersubunit bridge (bridge B4) with the 23S rRNA of the 50S subunit in the ribosome. This Bacteroides thetaiotaomicron (strain ATCC 29148 / DSM 2079 / JCM 5827 / CCUG 10774 / NCTC 10582 / VPI-5482 / E50) protein is Small ribosomal subunit protein uS15.